The following is a 180-amino-acid chain: Negative modulator of initiation of replication (180 aa).

Residues 87–88 (AV) are interaction with DNA.

The protein belongs to the SeqA family. In terms of assembly, homodimer. Polymerizes to form helical filaments.

Its subcellular location is the cytoplasm. Functionally, negative regulator of replication initiation, which contributes to regulation of DNA replication and ensures that replication initiation occurs exactly once per chromosome per cell cycle. Binds to pairs of hemimethylated GATC sequences in the oriC region, thus preventing assembly of replication proteins and re-initiation at newly replicated origins. Repression is relieved when the region becomes fully methylated. The chain is Negative modulator of initiation of replication from Ferrimonas balearica (strain DSM 9799 / CCM 4581 / KCTC 23876 / PAT).